Consider the following 213-residue polypeptide: ATP-dependent Clp protease proteolytic subunit 1 (213 aa).

The active-site Nucleophile is Ser-114. Residue His-139 is part of the active site.

The protein belongs to the peptidase S14 family. As to quaternary structure, fourteen ClpP subunits assemble into 2 heptameric rings which stack back to back to give a disk-like structure with a central cavity, resembling the structure of eukaryotic proteasomes.

The protein resides in the cytoplasm. The catalysed reaction is Hydrolysis of proteins to small peptides in the presence of ATP and magnesium. alpha-casein is the usual test substrate. In the absence of ATP, only oligopeptides shorter than five residues are hydrolyzed (such as succinyl-Leu-Tyr-|-NHMec, and Leu-Tyr-Leu-|-Tyr-Trp, in which cleavage of the -Tyr-|-Leu- and -Tyr-|-Trp bonds also occurs).. Functionally, cleaves peptides in various proteins in a process that requires ATP hydrolysis. Has a chymotrypsin-like activity. Plays a major role in the degradation of misfolded proteins. The protein is ATP-dependent Clp protease proteolytic subunit 1 of Pseudomonas aeruginosa (strain ATCC 15692 / DSM 22644 / CIP 104116 / JCM 14847 / LMG 12228 / 1C / PRS 101 / PAO1).